A 1820-amino-acid polypeptide reads, in one-letter code: Cation channel sperm-associated targeting subunit tau (1820 aa).

The C2 domain occupies 87–222; sequence DSEELEITQE…QKGCFIEEVQ (136 aa). Disordered regions lie at residues 360-383, 403-443, 695-722, and 838-857; these read SEETNIDEASENTKSNHPEEELEN, LLDN…TEVH, EVSMNSEAREKSSSPLLSIHDKSSSSME, and SSTKKKHLISEVPNSKSGSS. Polar residues predominate over residues 415–443; it reads PTLNQSDQDNSTADASKNDESTPSPTEVH.

In terms of assembly, component of the CatSper complex or CatSpermasome composed of the core pore-forming members CATSPER1, CATSPER2, CATSPER3 and CATSPER4 as well as auxiliary members CATSPERB, CATSPERG, CATSPERD, CATSPERE, CATSPERZ, C2CD6/CATSPERT, TMEM249, TMEM262 and EFCAB9. HSPA1 may be an additional auxiliary complex member. The core complex members CATSPER1, CATSPER2, CATSPER3 and CATSPER4 form a heterotetrameric channel. The auxiliary CATSPERB, CATSPERG, CATSPERD and CATSPERE subunits form a pavilion-like structure over the pore which stabilizes the complex through interactions with CATSPER4, CATSPER3, CATSPER1 and CATSPER2 respectively. SLCO6C1 interacts with CATSPERE and TMEM262/CATSPERH interacts with CATSPERB, further stabilizing the complex. C2CD6/CATSPERT interacts at least with CATSPERD and is required for targeting the CatSper complex in the flagellar membrane. Expressed in testis (at protein level).

The protein resides in the cell projection. It localises to the cilium. Its subcellular location is the flagellum membrane. Functionally, auxiliary component of the CatSper complex, a complex involved in sperm cell hyperactivation. Sperm cell hyperactivation is needed for sperm motility which is essential late in the preparation of sperm for fertilization. Required for CatSper complex targeting and trafficking into the quadrilinear nanodomains. Targets the preassembled CatSper complexes to elongating flagella, where it links the channel-carrying vesicles and motor proteins. This chain is Cation channel sperm-associated targeting subunit tau, found in Homo sapiens (Human).